A 335-amino-acid chain; its full sequence is Tryptophan--tRNA ligase (335 aa).

ATP-binding positions include 19–21 and 28–29; these read QPS and GN. The 'HIGH' region motif lies at 20–29; that stretch reads PSSGMLHLGN. Asp143 contacts L-tryptophan. ATP-binding positions include 155–157, Ile192, and 201–205; these read GAD and KMSKS. The short motif at 201-205 is the 'KMSKS' region element; sequence KMSKS.

Belongs to the class-I aminoacyl-tRNA synthetase family. As to quaternary structure, homodimer.

It is found in the cytoplasm. The catalysed reaction is tRNA(Trp) + L-tryptophan + ATP = L-tryptophyl-tRNA(Trp) + AMP + diphosphate + H(+). Functionally, catalyzes the attachment of tryptophan to tRNA(Trp). This is Tryptophan--tRNA ligase from Tropheryma whipplei (strain Twist) (Whipple's bacillus).